Reading from the N-terminus, the 492-residue chain is Glutamyl-tRNA(Gln) amidotransferase subunit A (492 aa).

Residues Lys-78 and Ser-158 each act as charge relay system in the active site. Ser-182 serves as the catalytic Acyl-ester intermediate.

Belongs to the amidase family. GatA subfamily. Heterotrimer of A, B and C subunits.

It carries out the reaction L-glutamyl-tRNA(Gln) + L-glutamine + ATP + H2O = L-glutaminyl-tRNA(Gln) + L-glutamate + ADP + phosphate + H(+). In terms of biological role, allows the formation of correctly charged Gln-tRNA(Gln) through the transamidation of misacylated Glu-tRNA(Gln) in organisms which lack glutaminyl-tRNA synthetase. The reaction takes place in the presence of glutamine and ATP through an activated gamma-phospho-Glu-tRNA(Gln). This is Glutamyl-tRNA(Gln) amidotransferase subunit A from Rhodopseudomonas palustris (strain BisB18).